Here is a 215-residue protein sequence, read N- to C-terminus: UPF0502 protein YceH (215 aa).

Lys80 carries the N6-acetyllysine modification.

Belongs to the UPF0502 family.

The sequence is that of UPF0502 protein YceH from Escherichia coli O127:H6 (strain E2348/69 / EPEC).